A 1146-amino-acid chain; its full sequence is Sodium/hydrogen exchanger 7 (1146 aa).

Over M1–K28 the chain is Extracellular. The helical transmembrane segment at L29 to A49 threads the bilayer. Over S50 to R58 the chain is Cytoplasmic. Residues V59–A79 traverse the membrane as a helical segment. Over K80–E99 the chain is Extracellular. The chain crosses the membrane as a helical span at residues L100 to H120. Topologically, residues Q121–G127 are cytoplasmic. The chain crosses the membrane as a helical span at residues Q128–V148. Residues K149–K159 are Extracellular-facing. The chain crosses the membrane as a helical span at residues T160 to L180. The Cytoplasmic segment spans residues K181 to T191. Residues I192–L212 traverse the membrane as a helical segment. At K213–K227 the chain is on the extracellular side. Residues F228–W250 form a helical membrane-spanning segment. Residues L251–F253 are Cytoplasmic-facing. The chain crosses the membrane as a helical span at residues I254 to Y273. Residues Y274–E278 are Extracellular-facing. Residues W279–A299 form a helical membrane-spanning segment. Residues R300–H313 lie on the Cytoplasmic side of the membrane. The chain crosses the membrane as a helical span at residues F314 to I334. The Extracellular segment spans residues A335–R352. The helical transmembrane segment at F353–Y373 threads the bilayer. Over P374–E387 the chain is Cytoplasmic. The helical transmembrane segment at S388–V408 threads the bilayer. Over K409 to E420 the chain is Extracellular. Residues T421–G441 traverse the membrane as a helical segment. Residues S442–L1146 lie on the Cytoplasmic side of the membrane. Disordered stretches follow at residues L981–R1001 and C1102–E1128. A compositionally biased stretch (low complexity) spans S986–S996. Polar residues predominate over residues E1109–V1118.

The protein belongs to the monovalent cation:proton antiporter 1 (CPA1) transporter (TC 2.A.36) family. Interacts with CIPK24/SOS2 and CBL4/SOS3. Phosphorylated by CIPK24/SOS2 in complex with CBL4/SOS3. As to expression, more expressed in roots than in shoots. Mostly localized in parenchyma cells at the xylem/symplast boundary in roots, hypocotyls, stems and leaves. Also present in root tips epidermal cells.

It is found in the cell membrane. The catalysed reaction is Na(+)(in) + H(+)(out) = Na(+)(out) + H(+)(in). It carries out the reaction K(+)(in) + H(+)(out) = K(+)(out) + H(+)(in). Functionally, acts in electroneutral exchange of protons for cations such as Na(+) or Li(+) across plasma membrane. Involved in Na(+) and K(+) homeostasis. Required for cytoplasmic Na(+) and Li(+) detoxification by secreting them from the cytoplasm to the extracellular space. Regulates Na(+) content of the xylem sap. This is Sodium/hydrogen exchanger 7 (NHX7) from Arabidopsis thaliana (Mouse-ear cress).